A 298-amino-acid polypeptide reads, in one-letter code: Small ribosomal subunit protein uS2 (298 aa).

2 stretches are compositionally biased toward basic and acidic residues: residues 237–259 and 280–298; these read QSKELDDKADEKAAKVSHSDGQK and PKSEKQDNVDAAKLPENKG. The interval 237-298 is disordered; that stretch reads QSKELDDKAD…DAAKLPENKG (62 aa).

This sequence belongs to the universal ribosomal protein uS2 family.

The polypeptide is Small ribosomal subunit protein uS2 (Neorickettsia sennetsu (strain ATCC VR-367 / Miyayama) (Ehrlichia sennetsu)).